A 254-amino-acid polypeptide reads, in one-letter code: NAD kinase (254 aa).

Residue Asp44 is the Proton acceptor of the active site. NAD(+) is bound by residues Asp44–Gly45, Asn114–Glu115, Asp144, Ala152, Thr155–Ser160, and Ala179.

This sequence belongs to the NAD kinase family. It depends on a divalent metal cation as a cofactor.

The protein resides in the cytoplasm. The catalysed reaction is NAD(+) + ATP = ADP + NADP(+) + H(+). Functionally, involved in the regulation of the intracellular balance of NAD and NADP, and is a key enzyme in the biosynthesis of NADP. Catalyzes specifically the phosphorylation on 2'-hydroxyl of the adenosine moiety of NAD to yield NADP. The sequence is that of NAD kinase from Cereibacter sphaeroides (strain ATCC 17025 / ATH 2.4.3) (Rhodobacter sphaeroides).